The chain runs to 365 residues: MPEITVRAKSKTYPVYINEFALEDVREKWTESLAKFSHVFVLTDEHVAELHQAKLDAVLADLPVVTYYVAPNGEEAKTFRVYEDVMTKLIETGLDRKAVLIAFGGGVIGDLGGFVAATYMRGIPFYQVPTTVLAHDSAVGGKVAINHPLGKNMIGNFYQPEAVIYDTQFFATLPEREMRSGFAEMIKHALISDQTLLRALMDTFTEPKDFYTKDLTPFLQRGIEIKANIVAQDETEQGVRAYLNFGHTFGHALEAYGNFGKWLHGEAITYGMIYALTMSETIYGLDFDLAEFKTWLKQLGYDTTFDATVPFNKILENMRHDKKTTFNEISMVLLEEIGEPVIFKAEDDLIFETYKRVMRNGGNGI.

Residues 106-110, 130-131, lysine 142, lysine 151, and 169-172 contribute to the NAD(+) site; these read GVIGD, TT, and FFAT. Zn(2+) contacts are provided by glutamate 184, histidine 247, and histidine 264.

This sequence belongs to the sugar phosphate cyclases superfamily. Dehydroquinate synthase family. Requires NAD(+) as cofactor. Co(2+) is required as a cofactor. The cofactor is Zn(2+).

The protein resides in the cytoplasm. The catalysed reaction is 7-phospho-2-dehydro-3-deoxy-D-arabino-heptonate = 3-dehydroquinate + phosphate. It functions in the pathway metabolic intermediate biosynthesis; chorismate biosynthesis; chorismate from D-erythrose 4-phosphate and phosphoenolpyruvate: step 2/7. Its function is as follows. Catalyzes the conversion of 3-deoxy-D-arabino-heptulosonate 7-phosphate (DAHP) to dehydroquinate (DHQ). In Listeria monocytogenes serotype 4b (strain F2365), this protein is 3-dehydroquinate synthase.